A 354-amino-acid polypeptide reads, in one-letter code: Protein-glutamate methylesterase/protein-glutamine glutaminase 2 (354 aa).

The Response regulatory domain maps to 5–122; that stretch reads RVLIVDDSAL…SLKIKEVAEE (118 aa). 4-aspartylphosphate is present on D56. The region spanning 159–354 is the CheB-type methylesterase domain; the sequence is PDTSFKKLIL…IADRIVELVR (196 aa). Active-site residues include S172, H199, and D298.

The protein belongs to the CheB family. Phosphorylated by CheA. Phosphorylation of the N-terminal regulatory domain activates the methylesterase activity.

It is found in the cytoplasm. The catalysed reaction is [protein]-L-glutamate 5-O-methyl ester + H2O = L-glutamyl-[protein] + methanol + H(+). It catalyses the reaction L-glutaminyl-[protein] + H2O = L-glutamyl-[protein] + NH4(+). In terms of biological role, involved in chemotaxis. Part of a chemotaxis signal transduction system that modulates chemotaxis in response to various stimuli. Catalyzes the demethylation of specific methylglutamate residues introduced into the chemoreceptors (methyl-accepting chemotaxis proteins or MCP) by CheR. Also mediates the irreversible deamidation of specific glutamine residues to glutamic acid. This chain is Protein-glutamate methylesterase/protein-glutamine glutaminase 2, found in Carboxydothermus hydrogenoformans (strain ATCC BAA-161 / DSM 6008 / Z-2901).